The chain runs to 374 residues: Methylthioribose-1-phosphate isomerase (374 aa).

Asp-251 serves as the catalytic Proton donor.

This sequence belongs to the eIF-2B alpha/beta/delta subunits family. MtnA subfamily.

The protein localises to the cytoplasm. Its subcellular location is the nucleus. It catalyses the reaction 5-(methylsulfanyl)-alpha-D-ribose 1-phosphate = 5-(methylsulfanyl)-D-ribulose 1-phosphate. Its pathway is amino-acid biosynthesis; L-methionine biosynthesis via salvage pathway; L-methionine from S-methyl-5-thio-alpha-D-ribose 1-phosphate: step 1/6. Functionally, catalyzes the interconversion of methylthioribose-1-phosphate (MTR-1-P) into methylthioribulose-1-phosphate (MTRu-1-P). This chain is Methylthioribose-1-phosphate isomerase, found in Oryza sativa subsp. indica (Rice).